Reading from the N-terminus, the 385-residue chain is MATTASNHYNLLGSGSSIVHADPGGMQQAQSYRDAQTLVQSDYTLQSNGHPLSHAHQWITALSHGDGAPWATSPLGQQDIKPTVQSSRDELHGSGTLQHQSRAPHLVHPAHGNHHGPGAWRSTGSTHLSSMASSNGQGLLYSQPSFTVNGMINPGSGQGMHHHGLRDSHDDHHGDHGHQQPSQTQQQQQQHSQLQGGHHDHSDEDTPTSDDLEQFAKQFKQRRIKLGFTQADVGLALGTLYGNVFSQTTICRFEALQLSFKNMCKLKPLLNKWLEEADSSSGSPTSIDKIAAQGRKRKKRTSIEVSVKGALESHFLKCPKPAAQEITSLADSLQLEKEVVRVWFCNRRQKEKRMTPPGGTIPGAEDVYGASRDTPPHLGVQTSVQ.

Disordered stretches follow at residues 106–136 (LVHP…SSNG), 149–209 (NGMI…TPTS), and 351–385 (EKRM…TSVQ). Over residues 122–136 (STGSTHLSSMASSNG) the composition is skewed to polar residues. The span at 165 to 178 (LRDSHDDHHGDHGH) shows a compositional bias: basic and acidic residues. The span at 179 to 196 (QQPSQTQQQQQQHSQLQG) shows a compositional bias: low complexity. Positions 204–278 (EDTPTSDDLE…LLNKWLEEAD (75 aa)) constitute a POU-specific domain. Positions 296–355 (KRKKRTSIEVSVKGALESHFLKCPKPAAQEITSLADSLQLEKEVVRVWFCNRRQKEKRMT) form a DNA-binding region, homeobox.

This sequence belongs to the POU transcription factor family. Class-3 subfamily. In terms of tissue distribution, expressed in the developing brain and spinal cord. Also found in a restricted region of the auditory vesicle during development. In the adult, expression is restricted to the brain.

It localises to the nucleus. In terms of biological role, transcription factor that may be implicated in patterning of the central nervous system during early development. The sequence is that of POU domain, class 3, transcription factor 2-B (pou3f2-b) from Xenopus laevis (African clawed frog).